The following is a 162-amino-acid chain: Ribosome maturation factor RimP (162 aa).

Belongs to the RimP family.

Its subcellular location is the cytoplasm. Required for maturation of 30S ribosomal subunits. This is Ribosome maturation factor RimP from Cupriavidus pinatubonensis (strain JMP 134 / LMG 1197) (Cupriavidus necator (strain JMP 134)).